Consider the following 318-residue polypeptide: Olfactory receptor 13C2 (318 aa).

Over 1 to 25 the chain is Extracellular; the sequence is MEWENHTILVEFFLKGLSGHPRLEL. Asparagine 5 carries an N-linked (GlcNAc...) asparagine glycan. The chain crosses the membrane as a helical span at residues 26-46; it reads LFFVLIFIMYVVILLGNGTLI. Residues 47–54 are Cytoplasmic-facing; sequence LISILDPH. Residues 55 to 75 form a helical membrane-spanning segment; that stretch reads LHTPMYFFLGNLSFLDICYTT. Residues 76–99 are Extracellular-facing; sequence TSIPSTLVSFLSERKTISLSGCAV. Cysteine 97 and cysteine 189 are oxidised to a cystine. The chain crosses the membrane as a helical span at residues 100-120; sequence QMFLGLAMGTTECVLLGMMAF. The Cytoplasmic segment spans residues 121-139; sequence DRYVAICNPLRYPIIMSKD. The helical transmembrane segment at 140 to 160 threads the bilayer; that stretch reads AYVPMAAGSWIIGAVNSAVQS. The Extracellular segment spans residues 161-197; the sequence is VFVVQLPFCRNNIINHFTCEILAVMKLACADISDNEF. Residues 198-217 form a helical membrane-spanning segment; sequence IMLVATTLFILTPLLLIIVS. Over 218–237 the chain is Cytoplasmic; it reads YTLIIVSIFKISSSEGRSKA. A helical transmembrane segment spans residues 238 to 258; that stretch reads SSTCSAHLTVVIIFYGTILFM. Residues 259-277 lie on the Extracellular side of the membrane; it reads YMKPKSKETLNSDDLDATD. The helical transmembrane segment at 278 to 298 threads the bilayer; sequence KIISMFYGVMTPMMNPLIYSL. The Cytoplasmic portion of the chain corresponds to 299 to 318; sequence RNKDVKEAVKHLLNRRFFSK.

The protein belongs to the G-protein coupled receptor 1 family.

Its subcellular location is the cell membrane. In terms of biological role, odorant receptor. This chain is Olfactory receptor 13C2 (OR13C2), found in Homo sapiens (Human).